A 273-amino-acid chain; its full sequence is Bidirectional sugar transporter SWEET1a (273 aa).

Residues 1–6 lie on the Extracellular side of the membrane; that stretch reads MEHIAR. A helical transmembrane segment spans residues 7–27; the sequence is FFFGVSGNVIALFLFLSPVVT. The MtN3/slv 1 domain occupies 7 to 95; sequence FFFGVSGNVI…VIFLIFAERK (89 aa). The Cytoplasmic portion of the chain corresponds to 28 to 42; the sequence is FWRIIKKRSTEDFSG. The helical transmembrane segment at 43–63 threads the bilayer; the sequence is VPYNMTLLNCLLSAWYGLPFV. Residues 64–71 lie on the Extracellular side of the membrane; sequence SPNNILVT. Residues 72-92 form a helical membrane-spanning segment; sequence TINGTGSVIEAIYVVIFLIFA. Topologically, residues 93 to 101 are cytoplasmic; that stretch reads ERKARLKMM. A helical membrane pass occupies residues 102 to 122; it reads GLLGLVTSIFTMVVLVSLLAL. At 123–128 the chain is on the extracellular side; sequence HGQGRK. Residues 129–149 traverse the membrane as a helical segment; sequence LFCGLAATIFSICMYASPLSI. The MtN3/slv 2 domain maps to 131–214; that stretch reads CGLAATIFSI…ILYAIYRNHK (84 aa). At 150–163 the chain is on the cytoplasmic side; sequence MRLVIKTKSVEFMP. The chain crosses the membrane as a helical span at residues 164–184; sequence FLLSLSVFLCGTSWFIYGLLG. At 185-188 the chain is on the extracellular side; the sequence is RDPF. The chain crosses the membrane as a helical span at residues 189–209; it reads IAIPNGCGSFLGLMQLILYAI. The Cytoplasmic portion of the chain corresponds to 210–273; that stretch reads YRNHKGATPA…SADDKVASQV (64 aa).

This sequence belongs to the SWEET sugar transporter family. As to quaternary structure, forms homooligomers and/or heterooligomers.

It localises to the cell membrane. In terms of biological role, mediates both low-affinity uptake and efflux of sugar across the plasma membrane. This Oryza sativa subsp. japonica (Rice) protein is Bidirectional sugar transporter SWEET1a (SWEET1A).